The sequence spans 308 residues: Probable manganese-dependent inorganic pyrophosphatase (308 aa).

The Mn(2+) site is built by histidine 9, aspartate 13, aspartate 15, aspartate 74, histidine 96, and aspartate 148.

This sequence belongs to the PPase class C family. Mn(2+) is required as a cofactor.

The protein resides in the cytoplasm. It catalyses the reaction diphosphate + H2O = 2 phosphate + H(+). The protein is Probable manganese-dependent inorganic pyrophosphatase of Oceanobacillus iheyensis (strain DSM 14371 / CIP 107618 / JCM 11309 / KCTC 3954 / HTE831).